We begin with the raw amino-acid sequence, 84 residues long: Small ribosomal subunit protein uS17 (84 aa).

It belongs to the universal ribosomal protein uS17 family. Part of the 30S ribosomal subunit.

In terms of biological role, one of the primary rRNA binding proteins, it binds specifically to the 5'-end of 16S ribosomal RNA. This is Small ribosomal subunit protein uS17 from Buchnera aphidicola subsp. Cinara cedri (strain Cc).